A 143-amino-acid polypeptide reads, in one-letter code: Histone H2AX (143 aa).

A disordered region spans residues 1 to 22 (MSGRGKTGGKARAKAKSRSSRA). The residue at position 2 (Ser2) is an N-acetylserine. Ser2 bears the Phosphoserine mark. N6-acetyllysine is present on residues Lys6 and Lys10. Over residues 7–19 (TGGKARAKAKSRS) the composition is skewed to basic residues. Lys10 is modified (N6-lactoyllysine; alternate). Glycyl lysine isopeptide (Lys-Gly) (interchain with G-Cter in ubiquitin) cross-links involve residues Lys14 and Lys16. Lys37 carries the post-translational modification N6-acetyllysine. A Glycyl lysine isopeptide (Lys-Gly) (interchain with G-Cter in ubiquitin) cross-link involves residue Lys120. Residues 121–143 (TSATVGPKAPSGGKKATQASQEY) are disordered. At Ser122 the chain carries Phosphoserine. Glycyl lysine isopeptide (Lys-Gly) (interchain with G-Cter in SUMO2) cross-links involve residues Lys128 and Lys135. At Ser140 the chain carries Phosphoserine; by ATM, ATR and PRKDC. The [ST]-Q motif motif lies at 140–141 (SQ). Position 143 is a phosphotyrosine; by WSTF (Tyr143).

The protein belongs to the histone H2A family. As to quaternary structure, the nucleosome is a histone octamer containing two molecules each of H2A, H2B, H3 and H4 assembled in one H3-H4 heterotetramer and two H2A-H2B heterodimers. The octamer wraps approximately 147 bp of DNA. Interacts with numerous proteins required for DNA damage signaling and repair when phosphorylated on Ser-140. These include MDC1, TP53BP1, BRCA1 and the MRN complex, composed of MRE11, RAD50, and NBN. Interaction with the MRN complex is mediated at least in part by NBN. Also interacts with DHX9/NDHII when phosphorylated on Ser-140 and MCPH1 when phosphorylated at Ser-140 or Tyr-143. Interacts with ARRB2; the interaction is detected in the nucleus upon OR1D2 stimulation. Interacts with WRAP53/TCAB1. Interacts with HDGFL2. Interacts with DNA damage up-regulated protein DDUP. Forms a complex with DDUP and RAD18 following DDUP phosphorylation. In terms of assembly, (Microbial infection) Interacts with Epstein-Barr virus protein EBNA6. In terms of processing, phosphorylated by VRK1. Phosphorylated on Ser-140 (to form gamma-H2AX or H2AX139ph) in response to DNA double strand breaks (DSBs) generated by exogenous genotoxic agents and by stalled replication forks, and may also occur during meiotic recombination events and immunoglobulin class switching in lymphocytes. Phosphorylation can extend up to several thousand nucleosomes from the actual site of the DSB and may mark the surrounding chromatin for recruitment of proteins required for DNA damage signaling and repair. Widespread phosphorylation may also serve to amplify the damage signal or aid repair of persistent lesions. Phosphorylation of Ser-140 (H2AX139ph) in response to ionizing radiation is mediated by both ATM and PRKDC while defects in DNA replication induce Ser-140 phosphorylation (H2AX139ph) subsequent to activation of ATR and PRKDC. Dephosphorylation of Ser-140 by PP2A is required for DNA DSB repair. In meiosis, Ser-140 phosphorylation (H2AX139ph) may occur at synaptonemal complexes during leptotene as an ATM-dependent response to the formation of programmed DSBs by SPO11. Ser-140 phosphorylation (H2AX139ph) may subsequently occurs at unsynapsed regions of both autosomes and the XY bivalent during zygotene, downstream of ATR and BRCA1 activation. Ser-140 phosphorylation (H2AX139ph) may also be required for transcriptional repression of unsynapsed chromatin and meiotic sex chromosome inactivation (MSCI), whereby the X and Y chromosomes condense in pachytene to form the heterochromatic XY-body. During immunoglobulin class switch recombination in lymphocytes, Ser-140 phosphorylation (H2AX139ph) may occur at sites of DNA-recombination subsequent to activation of the activation-induced cytidine deaminase AICDA. Phosphorylation at Tyr-143 (H2AXY142ph) by BAZ1B/WSTF determines the relative recruitment of either DNA repair or pro-apoptotic factors. Phosphorylation at Tyr-143 (H2AXY142ph) favors the recruitment of APBB1/FE65 and pro-apoptosis factors such as MAPK8/JNK1, triggering apoptosis. In contrast, dephosphorylation of Tyr-143 by EYA proteins (EYA1, EYA2, EYA3 or EYA4) favors the recruitment of MDC1-containing DNA repair complexes to the tail of phosphorylated Ser-140 (H2AX139ph). Post-translationally, monoubiquitination of Lys-120 (H2AXK119ub) by RING1 and RNF2/RING2 complex gives a specific tag for epigenetic transcriptional repression. Following DNA double-strand breaks (DSBs), it is ubiquitinated through 'Lys-63' linkage of ubiquitin moieties by the E2 ligase UBE2N and the E3 ligases RNF8 and RNF168, leading to the recruitment of repair proteins to sites of DNA damage. Ubiquitination at Lys-14 and Lys-16 (H2AK13Ub and H2AK15Ub, respectively) in response to DNA damage is initiated by RNF168 that mediates monoubiquitination at these 2 sites, and 'Lys-63'-linked ubiquitin are then conjugated to monoubiquitin; RNF8 is able to extend 'Lys-63'-linked ubiquitin chains in vitro. H2AK119Ub and ionizing radiation-induced 'Lys-63'-linked ubiquitination (H2AK13Ub and H2AK15Ub) are distinct events. Acetylation at Lys-6 (H2AXK5ac) by KAT5 component of the NuA4 histone acetyltransferase complex promotes NBN/NBS1 assembly at the sites of DNA damage. Acetylation at Lys-37 increases in S and G2 phases. This modification has been proposed to play a role in DNA double-strand break repair.

It is found in the nucleus. Its subcellular location is the chromosome. Functionally, variant histone H2A which replaces conventional H2A in a subset of nucleosomes. Nucleosomes wrap and compact DNA into chromatin, limiting DNA accessibility to the cellular machineries which require DNA as a template. Histones thereby play a central role in transcription regulation, DNA repair, DNA replication and chromosomal stability. DNA accessibility is regulated via a complex set of post-translational modifications of histones, also called histone code, and nucleosome remodeling. Required for checkpoint-mediated arrest of cell cycle progression in response to low doses of ionizing radiation and for efficient repair of DNA double strand breaks (DSBs) specifically when modified by C-terminal phosphorylation. The polypeptide is Histone H2AX (Homo sapiens (Human)).